Reading from the N-terminus, the 556-residue chain is MAELDLIAPGPLTGVTAHPLAPLGPDPVSAIPVEKEDADPLSKSGEETQEQGHDPAELGAPGEEDQILCDFCLGASRVRAVKSCLTCMVNYCEEHLRPHQENSKLHSHQLTEPAKDQDLRTCPAHHSPLVSFCHTHQQCICQECGEGEHRGDSTVSLDAARRNKEVDLRCMQLDLEQKLKLNENAIARLQANHKSVLVSVSEVKVVAEEKFGELLAAVRKAQADVMVFLEEKEQAALNQVNSIKTHLEHRSLEMEKSKQELERLAAISNTVLFLEEYCKLKKTEDTASPSIYIGLKDKLSGIRKVITDSTLNLIQLLESYKEKLQEFSREEEYDIRTQVSAIVQRKYRTSKPEPRTRDEFLQYACDITFDPDTAHRYLRLQEDNRKVTNTTPWEHPYPDLPSRFLHWRQVLSQQSLYLHRYYFEVELSGGGTYVGLTCKGIDRKGEERNSCISGNSFSWSIHWNGKEFTAWHSDTETPLKVSPFRRLGIYVNFPGGILSFYGVEYDAMTLIHKFDCKFSEPVYAAFWLSKKENAIRIVDLGEEPEKPAGSSVEAAP.

The segment at 1-60 is disordered; the sequence is MAELDLIAPGPLTGVTAHPLAPLGPDPVSAIPVEKEDADPLSKSGEETQEQGHDPAELGA. Basic and acidic residues predominate over residues 33–56; sequence VEKEDADPLSKSGEETQEQGHDPA. 2 consecutive B box-type zinc fingers follow at residues 64 to 113 and 117 to 156; these read EDQI…LTEP and QDLRTCPAHHSPLVSFCHTHQQCICQECGEGEHRGDSTVS. A Phosphoserine modification is found at Ser-107. Coiled coils occupy residues 163–266 and 312–332; these read NKEV…RLAA and NLIQLLESYKEKLQEFSREEE. Ser-195 carries the phosphoserine modification. The 199-residue stretch at 347–545 folds into the B30.2/SPRY domain; it reads YRTSKPEPRT…RIVDLGEEPE (199 aa).

This sequence belongs to the TRIM/RBCC family. In terms of assembly, homodimerizes via its coiled-coil domain. Heterodimerizes with MID1, TRIM24 and PML. Interacts with Galectin-3/LGALS3 in a ULK1-dependent manner; this interaction mediates autophagy of damage endomembranes. Interacts with BECN1. Interacts with ATG16L1. Interacts with p62/SQSTM and LC3B/MAP1LC3B. Phosphorylated by ULK1. In terms of processing, auto-ubiquitinates via its B-Boxes. In terms of tissue distribution, widely expressed. Expressed in basal keratinocytes.

The protein resides in the cytoplasm. The catalysed reaction is S-ubiquitinyl-[E2 ubiquitin-conjugating enzyme]-L-cysteine + [acceptor protein]-L-lysine = [E2 ubiquitin-conjugating enzyme]-L-cysteine + N(6)-ubiquitinyl-[acceptor protein]-L-lysine.. E3 ubiquitin ligase that plays an essential role in the organization of autophagic response and ubiquitination upon lysosomal and phagosomal damages. Plays a role in the stress-induced biogenesis and degradation of protein aggresomes by regulating the p62-KEAP1-NRF2 signaling and particularly by modulating the ubiquitination levels and thus stability of NRF2. Acts as a scaffold protein and facilitates autophagic degradation of protein aggregates by interacting with p62/SQSTM, ATG16L1 and LC3B/MAP1LC3B. In turn, protects the cell against oxidative stress-induced cell death as a consequence of endomembrane damage. This chain is Tripartite motif-containing protein 16 (Trim16), found in Mus musculus (Mouse).